The following is a 250-amino-acid chain: Triosephosphate isomerase (250 aa).

8–10 (NWK) serves as a coordination point for substrate. Residue histidine 96 is the Electrophile of the active site. The active-site Proton acceptor is the glutamate 169. Residues glycine 175, serine 214, and 235 to 236 (GG) contribute to the substrate site.

Belongs to the triosephosphate isomerase family. Homodimer.

It localises to the cytoplasm. The catalysed reaction is D-glyceraldehyde 3-phosphate = dihydroxyacetone phosphate. It participates in carbohydrate biosynthesis; gluconeogenesis. Its pathway is carbohydrate degradation; glycolysis; D-glyceraldehyde 3-phosphate from glycerone phosphate: step 1/1. Its function is as follows. Involved in the gluconeogenesis. Catalyzes stereospecifically the conversion of dihydroxyacetone phosphate (DHAP) to D-glyceraldehyde-3-phosphate (G3P). The sequence is that of Triosephosphate isomerase from Oleidesulfovibrio alaskensis (strain ATCC BAA-1058 / DSM 17464 / G20) (Desulfovibrio alaskensis).